Reading from the N-terminus, the 303-residue chain is Oxygen-dependent coproporphyrinogen-III oxidase (303 aa).

Position 93 (S93) interacts with substrate. 2 residues coordinate a divalent metal cation: H97 and H107. H107 functions as the Proton donor in the catalytic mechanism. 109–111 (NVR) lines the substrate pocket. Positions 146 and 176 each coordinate a divalent metal cation. The important for dimerization stretch occupies residues 241-276 (YVEFNLVYDRGTLFGLQSGGRTESILMSLPPQVRWG). A substrate-binding site is contributed by 259 to 261 (GGR).

It belongs to the aerobic coproporphyrinogen-III oxidase family. As to quaternary structure, homodimer. The cofactor is a divalent metal cation.

It is found in the cytoplasm. The enzyme catalyses coproporphyrinogen III + O2 + 2 H(+) = protoporphyrinogen IX + 2 CO2 + 2 H2O. Its pathway is porphyrin-containing compound metabolism; protoporphyrin-IX biosynthesis; protoporphyrinogen-IX from coproporphyrinogen-III (O2 route): step 1/1. Functionally, involved in the heme biosynthesis. Catalyzes the aerobic oxidative decarboxylation of propionate groups of rings A and B of coproporphyrinogen-III to yield the vinyl groups in protoporphyrinogen-IX. This is Oxygen-dependent coproporphyrinogen-III oxidase from Pseudomonas putida (strain W619).